The following is a 571-amino-acid chain: Proline--tRNA ligase (571 aa).

The protein belongs to the class-II aminoacyl-tRNA synthetase family. ProS type 1 subfamily. In terms of assembly, homodimer.

The protein localises to the cytoplasm. It carries out the reaction tRNA(Pro) + L-proline + ATP = L-prolyl-tRNA(Pro) + AMP + diphosphate. Its function is as follows. Catalyzes the attachment of proline to tRNA(Pro) in a two-step reaction: proline is first activated by ATP to form Pro-AMP and then transferred to the acceptor end of tRNA(Pro). As ProRS can inadvertently accommodate and process non-cognate amino acids such as alanine and cysteine, to avoid such errors it has two additional distinct editing activities against alanine. One activity is designated as 'pretransfer' editing and involves the tRNA(Pro)-independent hydrolysis of activated Ala-AMP. The other activity is designated 'posttransfer' editing and involves deacylation of mischarged Ala-tRNA(Pro). The misacylated Cys-tRNA(Pro) is not edited by ProRS. In Pseudomonas putida (strain W619), this protein is Proline--tRNA ligase.